The following is an 861-amino-acid chain: MNVMENLEQHTPMMRQYLALKAENPDILLFYRMGDFYELFYDDAKKAAALLDISLTKRGQSAGQPIPMAGVPYHAVEGYLAKLVQLGESVAICEQIGDPALSKGPVERKIVRIVTPGTVSDENLLPERQDNLIVAVYQEKDKFGLATLDMTSGRFQISEPENAESLKAELQRLAPAELLYCEDFADMQLIEHYKGLRRRPIWEFELSTAVQLLNRQFGTKDLRGFGVEKAILGLCAAGCLLQYAKETQRTALPHIQSITLIQNNENIQLDAATRRNLELTQNLAGGTENTLASVLDKCVTPMGSRLLKRWIHQPIRHIQKLRQRQQIISEIIQLDLIGELQPYLQQVGDMERILARVALRTARPRDLTRLRTALEQIPTIKDILKNSPKFTALFQQIGDFDELFALLQQAIIDNPPLLIRDGGVIAEGYNAELDEWRALSDGATKYLEDLEIRERESTGIDTLKVGFNAVHGYYIQISQGQAHKAPIHYVRRQTLKNAERFIIPELKTYEDKVLKAKGASLALEKQLYDALFDRLLPHLGALQLASLTLSALDVLTNLAERAETLNYVAPDFSDEIGVKIENGRHPVVEQVLKEPFIANPVDLNQQRHLLIITGPNMGGKSTYMRQTALITLMAYIGSFVPAESALIGPIDRIFTRIGASDDLASGRSTFMVEMTEMANILHQAGANSLVLIDEIGRGTSTYDGLSLAWACAEWLAKKLRSLTLFATHYFELTVLPEQLAGTANVHLDALEHGDSIAFMHAVQDGAASKSYGLAVAALAGVPKNVVKLAKQKLANLEKLSQQSADQKLQDLRTINQNQGELNLMEEEDGKNAALEMLAQLDPDDLSPKQALAYLYQLKKLL.

614–621 (GPNMGGKS) serves as a coordination point for ATP.

Belongs to the DNA mismatch repair MutS family.

Functionally, this protein is involved in the repair of mismatches in DNA. It is possible that it carries out the mismatch recognition step. This protein has a weak ATPase activity. In Mannheimia succiniciproducens (strain KCTC 0769BP / MBEL55E), this protein is DNA mismatch repair protein MutS.